The chain runs to 123 residues: UPF0102 protein Mflv_4140 (123 aa).

This sequence belongs to the UPF0102 family.

The polypeptide is UPF0102 protein Mflv_4140 (Mycolicibacterium gilvum (strain PYR-GCK) (Mycobacterium gilvum (strain PYR-GCK))).